Here is a 444-residue protein sequence, read N- to C-terminus: Protein EVI2B (444 aa).

The signal sequence occupies residues 1–23 (MEFKYLVFIVLCQYLDNTFFSET). The Extracellular portion of the chain corresponds to 24 to 203 (EAITTEQQSL…GTAHKNNHNA (180 aa)). Asn-63, Asn-94, Asn-104, and Asn-127 each carry an N-linked (GlcNAc...) asparagine glycan. Polar residues-rich tracts occupy residues 104–131 (NNSLPQTSPSGFTLTNQPSPSTYNSTGQ) and 160–171 (THNQPTKSTPTI). A disordered region spans residues 104 to 197 (NNSLPQTSPS…EPPSGKGTAH (94 aa)). Pro residues predominate over residues 177–187 (TPPPPPPPLTS). A helical transmembrane segment spans residues 204 to 224 (IAAILIGTIIISMLVAILMII). Residues 225–444 (LWKYLRKPVL…SLPPPPTELL (220 aa)) are Cytoplasmic-facing. A Phosphothreonine modification is found at Thr-250. Residues Ser-269, Ser-272, Ser-279, and Ser-295 each carry the phosphoserine modification. Composition is skewed to polar residues over residues 318–332 (SEDSADGSTVGTAVS) and 361–370 (SPLPNDSINP). Disordered stretches follow at residues 318-337 (SEDSADGSTVGTAVSSDDAD) and 361-444 (SPLP…TELL).

As to expression, expressed in myeloid and lymphoid progenitors and increased in mature hematopoietic populations with the highest levels in granulocytes.

It is found in the membrane. Required for granulocyte differentiation and functionality of hematopoietic progenitor cells through the control of cell cycle progression and survival of hematopoietic progenitor cells. This is Protein EVI2B from Mus musculus (Mouse).